We begin with the raw amino-acid sequence, 509 residues long: ATP synthase subunit alpha (509 aa).

Position 169-176 (169-176) interacts with ATP; that stretch reads GDRQTGKT.

Belongs to the ATPase alpha/beta chains family. F-type ATPases have 2 components, CF(1) - the catalytic core - and CF(0) - the membrane proton channel. CF(1) has five subunits: alpha(3), beta(3), gamma(1), delta(1), epsilon(1). CF(0) has three main subunits: a(1), b(2) and c(9-12). The alpha and beta chains form an alternating ring which encloses part of the gamma chain. CF(1) is attached to CF(0) by a central stalk formed by the gamma and epsilon chains, while a peripheral stalk is formed by the delta and b chains.

Its subcellular location is the cell inner membrane. It catalyses the reaction ATP + H2O + 4 H(+)(in) = ADP + phosphate + 5 H(+)(out). Functionally, produces ATP from ADP in the presence of a proton gradient across the membrane. The alpha chain is a regulatory subunit. In Chelativorans sp. (strain BNC1), this protein is ATP synthase subunit alpha.